Consider the following 753-residue polypeptide: Pumilio homolog 23 (753 aa).

A disordered region spans residues 1 to 84 (MVSVGSKSLP…SEFEHQNQFV (84 aa)). 3 stretches are compositionally biased toward basic and acidic residues: residues 23-38 (MGERGKSSNNHSERNK), 47-57 (GNRGFDVDSSK), and 73-84 (KHSEFEHQNQFV). Pumilio repeat units follow at residues 123–158 (ETRGREYEIATDYIISHVLQTLLEGCELDQLCSFIR), 159–198 (NSASVFPAIAMDRSGSHVAESALKSLATHLENPDAYSVIE), 206–244 (KVIVDNPLDMMCNCYGSHVLRRLLCLCKGVSLDSPELYG), 284–325 (GLLS…EIIP), 345–380 (NVAKEILESMKDNSFSHLVEVILEVAPESLYNEMFN), 381–418 (KVFKNSLFELSVDRCANFVIQALISHARDQEQMGIMWE), 526–563 (SMKAEYITETAKDSSGARVIEAFLASDAATKQKRRLII), and 564–599 (KLRGHFGELSLHTSGSFTVEKCFDACNLTLREAIAS). The 354-residue stretch at 322–675 (EIIPLILRCN…DASEDAAQEI (354 aa)) folds into the PUM-HD domain. 3 stretches are compositionally biased toward basic and acidic residues: residues 677–688 (VKNTRKEIDHHP), 699–712 (HAKDKDEPFAGEKR), and 719–728 (KTSEATDKPK). Residues 677–753 (VKNTRKEIDH…KNRHSNKMRI (77 aa)) are disordered. The segment covering 744-753 (KNRHSNKMRI) has biased composition (basic residues).

It is found in the nucleus. The protein localises to the nucleolus. In terms of biological role, sequence-specific RNA-binding protein that regulates translation and mRNA stability by binding the 3'-UTR of target mRNAs. This chain is Pumilio homolog 23 (APUM23), found in Arabidopsis thaliana (Mouse-ear cress).